Consider the following 121-residue polypeptide: Large ribosomal subunit protein uL14 (121 aa).

It belongs to the universal ribosomal protein uL14 family. Part of the 50S ribosomal subunit. Forms a cluster with proteins L3 and L19. In the 70S ribosome, L14 and L19 interact and together make contacts with the 16S rRNA in bridges B5 and B8.

In terms of biological role, binds to 23S rRNA. Forms part of two intersubunit bridges in the 70S ribosome. This chain is Large ribosomal subunit protein uL14, found in Synechococcus elongatus (strain ATCC 33912 / PCC 7942 / FACHB-805) (Anacystis nidulans R2).